The sequence spans 291 residues: Protein-export membrane protein SecF (291 aa).

6 helical membrane-spanning segments follow: residues 19-39 (LVVIPLIILAVALLIIASWYV), 134-154 (LALGGVGVAFLGMSVLVFLMF), 156-176 (VFVPSIAVVVSAFSDIAISVA), 187-209 (LGTVAALLMIIGYSVDSDILLNN), 226-246 (MRTGVTMTLTSIIAMSVMAAV), and 256-278 (AAIGTVLVFGLIADLMNTYLLNL).

This sequence belongs to the SecD/SecF family. SecF subfamily. Part of the protein translocation apparatus. Forms a complex with SecD.

It is found in the cell membrane. Involved in protein export. In Haloquadratum walsbyi (strain DSM 16790 / HBSQ001), this protein is Protein-export membrane protein SecF.